Reading from the N-terminus, the 1724-residue chain is Protein scribble homolog (1724 aa).

Residues 1 to 821 (MLKCIPLWRC…MTVLRERMVE (821 aa)) are sufficient for targeting to adherens junction. 17 LRR repeats span residues 11–34 (NRHV…IYRY), 35–58 (NRSL…FFRL), 59–81 (HNLR…VANF), 83–105 (QLVE…KFCQ), 107–127 (LEIA…FTQL), 128–150 (RGLA…IGNL), 151–174 (SNLV…SFLV), 176–196 (LEQL…LGAL), 197–219 (PNLR…LGNL), 221–242 (QLVC…ISGL), 244–265 (ALTD…IGSL), 266–288 (KKLS…IGEC), 289–311 (ENLT…LGKL), 312–334 (KKLT…LGGC), 336–357 (SLNV…LANA), 359–380 (ELHV…LANL), and 382–405 (LKAM…DDEQ). Disordered regions lie at residues 451 to 484 (RDDS…LKVM), 496 to 620 (YTAR…RKDT), and 646 to 683 (SHDG…HTPF). Residues 518–534 (SNQSHDSQASSSTTSAT) show a composition bias toward low complexity. The span at 554-567 (VQEEEDLDEMEVEY) shows a compositional bias: acidic residues. A compositionally biased stretch (basic and acidic residues) spans 574 to 583 (FAEEPIIRGG). The span at 584 to 598 (DEDDDYDNDDDDAER) shows a compositional bias: acidic residues. Residues 611–620 (EKQRLIRKDT) are compositionally biased toward basic and acidic residues. The span at 661-678 (RDGEDDEEEEEDEDEEDD) shows a compositional bias: acidic residues. PDZ domains follow at residues 731–818 (TLSI…LRER), 867–955 (ATCL…DREQ), 1005–1094 (EVTL…RRDP), and 1101–1193 (EIVI…CDGF). The interval 955 to 995 (QSSVGGASPRTRPHSPPPPEPSDSPEQEDGGDEHLGNHLNC) is disordered. Disordered regions lie at residues 1283 to 1407 (LQKV…DRQK), 1414 to 1433 (KQQT…EDDL), 1449 to 1468 (REFM…AKQV), and 1488 to 1555 (SLGS…GESA). The span at 1295–1306 (FRIDSPVRDAAH) shows a compositional bias: basic and acidic residues. Polar residues-rich tracts occupy residues 1308–1329 (PHNS…NAST), 1346–1357 (PASQDGHSSPNP), and 1364–1385 (PINS…KQPS). A compositionally biased stretch (basic and acidic residues) spans 1395-1407 (HSPEQRSFKDRQK). The stretch at 1430–1461 (EDDLKKMKEEEAKRIEQRAREFMLDEDEEEEE) forms a coiled coil. A compositionally biased stretch (acidic residues) spans 1453-1463 (LDEDEEEEEED). Positions 1490-1506 (GSPTSRQCATPPNYSAT) are enriched in polar residues. A compositionally biased stretch (low complexity) spans 1507–1518 (PPSHCGSSGPSS). Over residues 1521 to 1538 (GKGDSQRNSVEDSFRLEQ) the composition is skewed to basic and acidic residues. Residue S1609 is modified to Phosphoserine. The interval 1621–1684 (IAKSKEGKKR…FMDESSSNAV (64 aa)) is disordered. The span at 1623 to 1632 (KSKEGKKRGT) shows a compositional bias: basic and acidic residues.

In terms of processing, palmitoylated.

It localises to the cell membrane. It is found in the cell junction. Its subcellular location is the adherens junction. The protein localises to the cell projection. The protein resides in the lamellipodium. It localises to the cytoplasm. It is found in the postsynapse. Its subcellular location is the presynapse. Its function is as follows. Scaffold protein involved in different aspects of polarized cells differentiation regulating epithelial and neuronal morphogenesis. Regulates the caudal migration of the nVII motor neurons. Required for convergent extension movements during gastrulation. The chain is Protein scribble homolog (scrib) from Danio rerio (Zebrafish).